The following is a 399-amino-acid chain: Proteasome-activating nucleotidase (399 aa).

Residues 19–60 (ITYLKRRIRQLELQVRMLEADKERLERELSRLRSEMSRLRQP) adopt a coiled-coil conformation. Residues 184–189 (GCGKTL) and H323 each bind ATP. Residues 397–399 (IYG) are docks into pockets in the proteasome alpha-ring to cause gate opening.

Belongs to the AAA ATPase family. As to quaternary structure, homohexamer. The hexameric complex has a two-ring architecture resembling a top hat that caps the 20S proteasome core at one or both ends. Upon ATP-binding, the C-terminus of PAN interacts with the alpha-rings of the proteasome core by binding to the intersubunit pockets.

Its subcellular location is the cytoplasm. Functionally, ATPase which is responsible for recognizing, binding, unfolding and translocation of substrate proteins into the archaeal 20S proteasome core particle. Is essential for opening the gate of the 20S proteasome via an interaction with its C-terminus, thereby allowing substrate entry and access to the site of proteolysis. Thus, the C-termini of the proteasomal ATPase function like a 'key in a lock' to induce gate opening and therefore regulate proteolysis. Unfolding activity requires energy from ATP hydrolysis, whereas ATP binding alone promotes ATPase-20S proteasome association which triggers gate opening, and supports translocation of unfolded substrates. This is Proteasome-activating nucleotidase from Pyrococcus horikoshii (strain ATCC 700860 / DSM 12428 / JCM 9974 / NBRC 100139 / OT-3).